A 198-amino-acid polypeptide reads, in one-letter code: Potassium-transporting ATPase KdpC subunit (198 aa).

The helical transmembrane segment at 8 to 28 threads the bilayer; sequence ILAVLVFTILCGIIYPVSTTV.

The protein belongs to the KdpC family. In terms of assembly, the system is composed of three essential subunits: KdpA, KdpB and KdpC.

It is found in the cell membrane. In terms of biological role, part of the high-affinity ATP-driven potassium transport (or Kdp) system, which catalyzes the hydrolysis of ATP coupled with the electrogenic transport of potassium into the cytoplasm. This subunit acts as a catalytic chaperone that increases the ATP-binding affinity of the ATP-hydrolyzing subunit KdpB by the formation of a transient KdpB/KdpC/ATP ternary complex. The protein is Potassium-transporting ATPase KdpC subunit of Clostridium perfringens (strain ATCC 13124 / DSM 756 / JCM 1290 / NCIMB 6125 / NCTC 8237 / Type A).